The following is a 156-amino-acid chain: uncharacterized protein (156 aa).

It belongs to the mimivirus L223/L227/L812 family.

This is an uncharacterized protein from Acanthamoeba polyphaga mimivirus (APMV).